A 285-amino-acid polypeptide reads, in one-letter code: Cold sensitive U2 snRNA suppressor 2 (285 aa).

Positions 45-130 (TSIYISGLPT…KQIRVERAQF (86 aa)) constitute an RRM 1 domain. Basic and acidic residues predominate over residues 135–149 (GDNMHGKENDLKEFN). The interval 135–154 (GDNMHGKENDLKEFNGPEPP) is disordered. The residue at position 163 (S163) is a Phosphoserine. The region spanning 183 to 265 (RTVIFANVFN…QKLLAFISGD (83 aa)) is the RRM 2 domain. The tract at residues 265 to 285 (DENTSSTSDKNEDSEVEDDLI) is disordered. A compositionally biased stretch (acidic residues) spans 276–285 (EDSEVEDDLI).

It belongs to the HTATSF1 family. In terms of assembly, interacts with PRP11. Associates with the U2 snRNA.

In terms of biological role, U2 snRNP protein which helps to refold U2 into a structure favorable for its binding to SF3b and SF3a prior to spliceosome assembly. Mediates functional interactions between U2 RNA and PRP5. Enforces ATP dependence during formation of the prespliceosome by brokering an interaction between PRP5 and the U2 snRNP that depends on correct U2 RNA structure. This is Cold sensitive U2 snRNA suppressor 2 (CUS2) from Saccharomyces cerevisiae (strain ATCC 204508 / S288c) (Baker's yeast).